Here is a 242-residue protein sequence, read N- to C-terminus: Protein HTATIP2 (242 aa).

A2 bears the N-acetylalanine mark. Residues 2-25 are required for interaction with elongation factor EEF1A1; it reads ADKETLLKLREDFKMQNKSVFILG. NADPH-binding residues include S27, G28, E29, T30, R52, R53, L92, G93, Y143, K147, L170, and R178. Catalysis depends on Y143, which acts as the Proton acceptor. K147 is a catalytic residue.

Monomer. Forms homodimers during oxidative stress. Interacts (via N-terminus) with elongation factor EEF1A1 (via middle-region); the interaction is direct and competes with EEF1A1 binding to guanyl-nucleotide exchange factor EEF1B2, thereby inhibiting GDP for GTP exchange and reactivation of EEF1A1. Interacts with nuclear transport receptors XPO4, IPO5/RANBP5, IPO7, IPO9 and KPNB1 as well as GCN1L1/GCN1 and LRPPRC probably through their HEAT repeats. Binds NCOA5/CIA.

Its function is as follows. Represses translation by preventing reactivation of elongation factor eEF1A. May also inhibit nuclear import by competing with nuclear import substrates for binding to a subset of nuclear transport receptors. Has additionally been proposed to act as a redox sensor involved in cellular oxidative stress surveillance. May bind NADPH. This chain is Protein HTATIP2, found in Rattus norvegicus (Rat).